The sequence spans 489 residues: Protein LMBR1L (489 aa).

The Extracellular segment spans residues 1-21; the sequence is MEAADYEVLSVREQLFHDRVR. Positions 1 to 59 are interaction with LGB; the sequence is MEAADYEVLSVREQLFHDRVRECIISILLFATLYILCHIFLTRFKKPAEFTTVDDEDAT. Positions 1 to 76 are LCN1-binding; it reads MEAADYEVLS…LCTFTLAVAL (76 aa). Residues 22-42 traverse the membrane as a helical segment; it reads ECIISILLFATLYILCHIFLT. Residues 43–66 lie on the Cytoplasmic side of the membrane; the sequence is RFKKPAEFTTVDDEDATVNKIALE. A helical transmembrane segment spans residues 67-87; it reads LCTFTLAVALGAVLLLPFSII. Residues 88 to 114 are Extracellular-facing; that stretch reads SNEVLLSLPRNYYIQWLNGSLIHGLWN. The helical transmembrane segment at 115 to 135 threads the bilayer; the sequence is LVFLFSNLSLVFLMPFAYFFT. Over 136–154 the chain is Cytoplasmic; that stretch reads ESEGFAGSRKGVLGRVYET. Residues 155 to 175 form a helical membrane-spanning segment; sequence VVMLILLTLLVLGMVWVASAI. At 176–196 the chain is on the extracellular side; the sequence is VDNDKASRESLYDFWEYYLPY. A helical membrane pass occupies residues 197-217; that stretch reads LYSCISFLGVLLLLVCTPLGL. The Cytoplasmic segment spans residues 218–305; it reads ARMFSVTGKL…NLGYPLAMLC (88 aa). A helical transmembrane segment spans residues 306–326; it reads LLVLTGLSVLIVAVHILELLI. Over 327 to 350 the chain is Extracellular; it reads DEAAMPRGMQDAALGQASFSKLGS. A helical transmembrane segment spans residues 351-371; sequence FGAIIQVVLIFYLMVSSVVGF. At 372-388 the chain is on the cytoplasmic side; that stretch reads YSSPLFGSLRPRWHDTS. The helical transmembrane segment at 389 to 409 threads the bilayer; that stretch reads MTQIIGNCVCLLVLSSALPVF. The Extracellular portion of the chain corresponds to 410-431; it reads SRTLGLTRFDLLGDFGRFNWLG. The helical transmembrane segment at 432 to 452 threads the bilayer; the sequence is NFYIVFLYNAAFAGLTTLCLV. Topologically, residues 453-489 are cytoplasmic; sequence KTFTAAVRAELIRAFGLDRLPLPVSGFPRASRKKQHQ.

Belongs to the LIMR family. In terms of assembly, dimer. Can also form higher oligomers. Interacts with LCN1; this interaction mediates the endocytosis of LCN1. Interacts with UBAC2, FAF2, VCP, AMFR, ZNRF3, CTNNB1, LRP6, GSK3B, FZD6, DVL2 and RNF43. Interacts with GSK3A. Interaction with LGB and SCGB1A1 is controversial. In terms of tissue distribution, highly expressed in the bone marrow, thymus, spleen and lymphocytes.

The protein localises to the cell membrane. It is found in the endoplasmic reticulum membrane. Functionally, plays an essential role in lymphocyte development by negatively regulating the canonical Wnt signaling pathway. In association with UBAC2 and E3 ubiquitin-protein ligase AMFR, promotes the ubiquitin-mediated degradation of CTNNB1 and Wnt receptors FZD6 and LRP6. LMBR1L stabilizes the beta-catenin destruction complex that is required for regulating CTNNB1 levels. Acts as a LCN1 receptor and can mediate its endocytosis. The chain is Protein LMBR1L (Lmbr1l) from Mus musculus (Mouse).